A 257-amino-acid chain; its full sequence is MSMGPAAGEGCGLCGADGGGCCSRHRHDDDGFPFVFPPSACQGIGAPAPPVHEFQFFGNDGGGDDGESVAWLFDDYPPPSPVAAAAGMHHRQPPYDGVVAPPSLFRRNTGAGGLTFDVSLGERPDLDAGLGLGGGGGRHAEAAASATIMSYCGSTFTDAASSMPKEMVAAMADDGESLNPNTVVGAMVEREAKLMRYKEKRKKRCYEKQIRYASRKAYAEMRPRVRGRFAKEPDQEAVAPPSTYVDPSRLELGQWFR.

At Ser68 the chain carries Phosphoserine; by CK1. The CCT domain maps to 190–232 (REAKLMRYKEKRKKRCYEKQIRYASRKAYAEMRPRVRGRFAKE). The short motif at 198-204 (KEKRKKR) is the Nuclear localization signal element. The tract at residues 226-245 (RGRFAKEPDQEAVAPPSTYV) is disordered.

Interacts with HD16/EL1. Phosphorylated at Ser-68 by HD16/EL1, a casein kinase 1. In terms of tissue distribution, expressed in the apical meristem, developing leaves, leaf sheaths of young seedling, root meristem, epidermal layer of developing stems and branch-primordia of developing panicles.

The protein localises to the nucleus. Its function is as follows. Probable transcription factor involved in the regulation of flowering time under long day (LD) conditions. Plays a major role as repressor of flowering. Controls flowering time by negatively regulating the expression of EHD1 and HD3A. This Oryza sativa subsp. japonica (Rice) protein is Transcription factor GHD7.